A 297-amino-acid polypeptide reads, in one-letter code: Ribosomal RNA small subunit methyltransferase A (297 aa).

S-adenosyl-L-methionine contacts are provided by N31, L33, G58, E79, D104, and N129.

The protein belongs to the class I-like SAM-binding methyltransferase superfamily. rRNA adenine N(6)-methyltransferase family. RsmA subfamily.

Its subcellular location is the cytoplasm. The enzyme catalyses adenosine(1518)/adenosine(1519) in 16S rRNA + 4 S-adenosyl-L-methionine = N(6)-dimethyladenosine(1518)/N(6)-dimethyladenosine(1519) in 16S rRNA + 4 S-adenosyl-L-homocysteine + 4 H(+). In terms of biological role, specifically dimethylates two adjacent adenosines (A1518 and A1519) in the loop of a conserved hairpin near the 3'-end of 16S rRNA in the 30S particle. May play a critical role in biogenesis of 30S subunits. This Staphylococcus aureus (strain MRSA252) protein is Ribosomal RNA small subunit methyltransferase A.